Reading from the N-terminus, the 177-residue chain is Prorelaxin (177 aa).

A signal peptide spans 1–22 (MSCKFVLQLLGFWLLLSQPCRA). 3 disulfide bridges follow: Cys-36–Cys-164, Cys-48–Cys-177, and Cys-163–Cys-168. Positions 64 to 149 (MTEEAVSSFI…LKSLYLDTLS (86 aa)) are cleaved as a propeptide — connecting peptide. Residues 80 to 114 (FDTMPNLSEKPKTALPEGHPSLPEQQQYVPVSSDS) are disordered. The span at 102 to 114 (PEQQQYVPVSSDS) shows a compositional bias: polar residues.

Belongs to the insulin family. Heterodimer of a B chain and an A chain linked by two disulfide bonds.

Its subcellular location is the secreted. In terms of biological role, relaxin is an ovarian hormone that acts with estrogen to produce dilatation of the birth canal in many mammals. It bears mature young, and allows separation of the pelvic bones. This chain is Prorelaxin (RLN), found in Mesocricetus auratus (Golden hamster).